The primary structure comprises 93 residues: uncharacterized protein (93 aa).

An N-terminal signal peptide occupies residues 1–22 (MSIPNLSSVTQLLSIATGLVST). Residue Asn5 is glycosylated (N-linked (GlcNAc...) asparagine; by host).

This is an uncharacterized protein from Invertebrate iridescent virus 6 (IIV-6).